Here is a 400-residue protein sequence, read N- to C-terminus: Phosphoglycerate kinase (400 aa).

Substrate-binding positions include 19-21, Arg-38, 61-64, Arg-124, and Arg-161; these read DLN and HLGR. Residues Lys-211, Gly-299, Glu-330, and 356–359 each bind ATP; that span reads GGDS.

The protein belongs to the phosphoglycerate kinase family. As to quaternary structure, monomer.

The protein resides in the cytoplasm. It carries out the reaction (2R)-3-phosphoglycerate + ATP = (2R)-3-phospho-glyceroyl phosphate + ADP. Its pathway is carbohydrate degradation; glycolysis; pyruvate from D-glyceraldehyde 3-phosphate: step 2/5. The chain is Phosphoglycerate kinase from Frankia alni (strain DSM 45986 / CECT 9034 / ACN14a).